The chain runs to 30 residues: Fibrinogen (30 aa).

Homodimer. Secreted into the hemolymph.

Its subcellular location is the secreted. It is found in the extracellular space. In terms of biological role, clotting protein. This Panulirus interruptus (California spiny lobster) protein is Fibrinogen.